A 169-amino-acid chain; its full sequence is Cell division inhibitor SulA (169 aa).

Residues 106-112 are ftsZ binding; that stretch reads ALRTGNY. The tract at residues 162-169 is lon protease binding; that stretch reads KIHSNLYH.

It belongs to the SulA family. In terms of assembly, interacts with FtsZ. Post-translationally, is rapidly cleaved and degraded by the Lon protease once DNA damage is repaired.

Component of the SOS system and an inhibitor of cell division. Accumulation of SulA causes rapid cessation of cell division and the appearance of long, non-septate filaments. In the presence of GTP, binds a polymerization-competent form of FtsZ in a 1:1 ratio, thus inhibiting FtsZ polymerization and therefore preventing it from participating in the assembly of the Z ring. This mechanism prevents the premature segregation of damaged DNA to daughter cells during cell division. The chain is Cell division inhibitor SulA from Salmonella choleraesuis (strain SC-B67).